The chain runs to 113 residues: Cell cycle protein GpsB (113 aa).

A coiled-coil region spans residues 36–68; it reads LDMVIKDYSTFTQEIEALQAENIRLVQELDNAP.

It belongs to the GpsB family. Forms polymers through the coiled coil domains. Interacts with PBP1, MreC and EzrA.

The protein resides in the cytoplasm. Its function is as follows. Divisome component that associates with the complex late in its assembly, after the Z-ring is formed, and is dependent on DivIC and PBP2B for its recruitment to the divisome. Together with EzrA, is a key component of the system that regulates PBP1 localization during cell cycle progression. Its main role could be the removal of PBP1 from the cell pole after pole maturation is completed. Also contributes to the recruitment of PBP1 to the division complex. Not essential for septum formation. In Listeria monocytogenes serotype 4b (strain CLIP80459), this protein is Cell cycle protein GpsB.